A 1389-amino-acid chain; its full sequence is DNA-directed RNA polymerase subunit beta'' (1389 aa).

Zn(2+)-binding residues include Cys-224, Cys-295, Cys-302, and Cys-305.

Belongs to the RNA polymerase beta' chain family. RpoC2 subfamily. In terms of assembly, in plastids the minimal PEP RNA polymerase catalytic core is composed of four subunits: alpha, beta, beta', and beta''. When a (nuclear-encoded) sigma factor is associated with the core the holoenzyme is formed, which can initiate transcription. Zn(2+) serves as cofactor.

It is found in the plastid. The protein resides in the chloroplast. The catalysed reaction is RNA(n) + a ribonucleoside 5'-triphosphate = RNA(n+1) + diphosphate. DNA-dependent RNA polymerase catalyzes the transcription of DNA into RNA using the four ribonucleoside triphosphates as substrates. In Morus indica (Mulberry), this protein is DNA-directed RNA polymerase subunit beta''.